The sequence spans 577 residues: CDPK-related kinase 7 (577 aa).

Residues 1 to 38 (MGLCHGKPIEQQSKNLPISNEIEETPKNSSQKAKSSGF) are disordered. Gly-2 carries N-myristoyl glycine lipidation. The region spanning 124–386 (YEIDGEVGRG…AAQALCHPWL (263 aa)) is the Protein kinase domain. Residues 130-138 (VGRGHFGYT) and Lys-156 each bind ATP. The active-site Proton acceptor is Asp-252. Ser-292 carries the phosphoserine modification. A Phosphoserine; by CPK1, CPK10 and CPK34 modification is found at Ser-334. The tract at residues 391-421 (ELKIPSDMIIYKLVKVYIMSSSLRKSALAAL) is autoinhibitory domain. The interval 410–430 (SSSLRKSALAALAKTLTVPQL) is calmodulin binding (CaMBD). 4 EF-hand domains span residues 428-464 (PQLT…STEA), 465-500 (TKDS…VYQL), 501-540 (EAME…GPSV), and 543-572 (HVVL…VSSR). The Ca(2+) site is built by Ser-443, Asn-445, Tyr-447, Lys-484, Glu-489, Asp-520, Asn-522, Glu-529, Asp-554, and Lys-556. Ser-558 bears the Phosphoserine mark.

Belongs to the protein kinase superfamily. Ser/Thr protein kinase family. CDPK subfamily. As to quaternary structure, binds calmodulin (CaM) in a calcium-dependent manner. In terms of processing, autophosphorylated.

The protein resides in the membrane. It catalyses the reaction L-seryl-[protein] + ATP = O-phospho-L-seryl-[protein] + ADP + H(+). The enzyme catalyses L-threonyl-[protein] + ATP = O-phospho-L-threonyl-[protein] + ADP + H(+). With respect to regulation, activated by calcium and calmodulin. Autophosphorylation may play an important role in the regulation of the kinase activity. In terms of biological role, may play a role in signal transduction pathways that involve calcium as a second messenger. The polypeptide is CDPK-related kinase 7 (CRK7) (Arabidopsis thaliana (Mouse-ear cress)).